Consider the following 184-residue polypeptide: Ethylene-responsive transcription factor ERF010 (184 aa).

A DNA-binding region (AP2/ERF) is located at residues 20-77; sequence PYKGIRMRKWGKWVAEIREPNKRSRLWLGSYSTPEAAARAYDTAVFYLRGPTARLNFP. Residues 123–184 are disordered; it reads QNRDSDVDNK…SSDEEWESKH (62 aa). Residues 161-172 show a composition bias toward basic and acidic residues; the sequence is LLDRVDLNKLPD. Residues 174 to 184 show a composition bias toward acidic residues; sequence ESSDEEWESKH.

It belongs to the AP2/ERF transcription factor family. ERF subfamily.

Its subcellular location is the nucleus. Its function is as follows. Probably acts as a transcriptional activator. Binds to the GCC-box pathogenesis-related promoter element. May be involved in the regulation of gene expression by stress factors and by components of stress signal transduction pathways. The protein is Ethylene-responsive transcription factor ERF010 (ERF010) of Arabidopsis thaliana (Mouse-ear cress).